Here is a 312-residue protein sequence, read N- to C-terminus: Ribosomal RNA small subunit methyltransferase H (312 aa).

S-adenosyl-L-methionine-binding positions include 33–35 (SGH), D53, F80, D101, and Q108.

It belongs to the methyltransferase superfamily. RsmH family.

It is found in the cytoplasm. The catalysed reaction is cytidine(1402) in 16S rRNA + S-adenosyl-L-methionine = N(4)-methylcytidine(1402) in 16S rRNA + S-adenosyl-L-homocysteine + H(+). Its function is as follows. Specifically methylates the N4 position of cytidine in position 1402 (C1402) of 16S rRNA. The sequence is that of Ribosomal RNA small subunit methyltransferase H from Desulforapulum autotrophicum (strain ATCC 43914 / DSM 3382 / VKM B-1955 / HRM2) (Desulfobacterium autotrophicum).